Consider the following 86-residue polypeptide: UPF0147 protein PYRAB16980 (86 aa).

Belongs to the UPF0147 family.

This is UPF0147 protein PYRAB16980 from Pyrococcus abyssi (strain GE5 / Orsay).